Reading from the N-terminus, the 444-residue chain is Phosphoglucosamine mutase (444 aa).

Serine 102 serves as the catalytic Phosphoserine intermediate. Residues serine 102, aspartate 239, aspartate 241, and aspartate 243 each coordinate Mg(2+). Residue serine 102 is modified to Phosphoserine.

The protein belongs to the phosphohexose mutase family. Mg(2+) is required as a cofactor. In terms of processing, activated by phosphorylation.

The catalysed reaction is alpha-D-glucosamine 1-phosphate = D-glucosamine 6-phosphate. Its function is as follows. Catalyzes the conversion of glucosamine-6-phosphate to glucosamine-1-phosphate. The chain is Phosphoglucosamine mutase from Saccharopolyspora erythraea (strain ATCC 11635 / DSM 40517 / JCM 4748 / NBRC 13426 / NCIMB 8594 / NRRL 2338).